The sequence spans 262 residues: tRNA pseudouridine synthase A 2 (262 aa).

The Nucleophile role is filled by D66. Y125 lines the substrate pocket.

It belongs to the tRNA pseudouridine synthase TruA family. Homodimer.

The catalysed reaction is uridine(38/39/40) in tRNA = pseudouridine(38/39/40) in tRNA. Its function is as follows. Formation of pseudouridine at positions 38, 39 and 40 in the anticodon stem and loop of transfer RNAs. This chain is tRNA pseudouridine synthase A 2, found in Protochlamydia amoebophila (strain UWE25).